Consider the following 1021-residue polypeptide: TLMFSFIQANCGRGRAATIELGVRLRRSESMFALVQEPYLGGDEMDVLPEGMRVFTDRRGKAAILVDHQEAICMPVETLTTDYGVCLVVKGSFGSIFLCAAYCQFDAPLEPYLRYMDAVLLQASRTPAILGLDANAVSPMWLSKLSRHAEGQANYRRGELLSEWMLEARVAALNQSTEVYTFDNHRATSDIDVTIVNEAASMWATYEWRVDEWELSDHNIITVVAEPTTARSVESIAPVPSWNFSNARWRLFKEEMVSRIAELPENFSESPLDQQVSTLRSIVHSVCDTALGRKLTRSPSRRARWWTADLCAARREVRRLRRLLQDGRRRDDDAAVELVVVELRRASAYYKKLIGRAKMDDWKRFVGDHADDPWGRVYKICRGRRKCTEIGCLRVNGELITDWGDCARVLLRNFFPVAESEAPTAIAEEVPPALEVFEVDTCVARLKSRRSPGLDGINGTICKAVWRAIPEHLASLFSRCIRLGYFPAEWKCPRVVSLLKGPDKDKCEPSSYRGICLLPVFGKVLEAIMVNRVREVLPEGCRWQFGFRQGRCVEDAWRHVKSSVGASAAQYVLGTFVDFKGAFDNVEWSAALSRLADLGCREMGLWQSFFSGRRAVIRSSSGTVEVPVTRGCPQGSISGPFIWDILMDVLLQRLQPYCQLSAYADDLLLLVEGNSRAVLEEKGAQLMSIVETWGAEVGDCLSTSKTVIMLLKGALRRAPTVRFAGRNLPYVRSCRYLGITVSEGMKFLTHIASLRQRMTGVVGALARVLRADWGFSPRARRTIYDGLMAPCVLFGAPVWYDTAEQVAAQRRLASCQRLILLGCLSVCRTVSTVALQVLGGAPPLDLAAKLLAIKYKLKRGFPLEENDWLYGEDIACLSWEQRKTRLEECLIQSWQNRWDDDSEPGRVTHRFIPYVTLAYRDPSFGFSMRTSFLLTGHGSFNAFLHGRALSDTTACACGDPYEDWMHILCACPLYADLRDLDGLGVQRLGENWIFEGILDDQEKTQRLAMFAEEVFLRRRAL.

Positions 479–741 (RCIRLGYFPA…RSCRYLGITV (263 aa)) constitute a Reverse transcriptase domain. The interval 955 to 971 (CACGDPYEDWMHILCAC) is gag-like cysteine motif.

The protein is Putative 115 kDa protein in type-1 retrotransposable element R1DM (R1A1-element\ORF2) of Drosophila melanogaster (Fruit fly).